Consider the following 130-residue polypeptide: uncharacterized protein (130 aa).

2 disordered regions span residues 1–47 and 78–130; these read MTFY…QSNT and QTLE…SESS. The span at 13–33 shows a compositional bias: polar residues; sequence QWKQLQTQQNKKNSPRPVTSS. Basic residues predominate over residues 86–110; it reads PSKHKRKRTKYRRTKKSKHHSRKKT. Residues 117 to 130 show a composition bias toward basic and acidic residues; sequence SERDSTTGRESESS.

This is an uncharacterized protein from Torque teno mini virus 1 (isolate TLMV-CBD279).